The chain runs to 315 residues: ATP synthase gamma chain (315 aa).

This sequence belongs to the ATPase gamma chain family. F-type ATPases have 2 components, CF(1) - the catalytic core - and CF(0) - the membrane proton channel. CF(1) has five subunits: alpha(3), beta(3), gamma(1), delta(1), epsilon(1). CF(0) has three main subunits: a, b and c.

The protein resides in the cellular thylakoid membrane. Produces ATP from ADP in the presence of a proton gradient across the membrane. The gamma chain is believed to be important in regulating ATPase activity and the flow of protons through the CF(0) complex. This is ATP synthase gamma chain from Trichormus variabilis (strain ATCC 29413 / PCC 7937) (Anabaena variabilis).